The chain runs to 216 residues: MSTHVICDFDGTITEEDNIIALMRRFAPPEWVELKDSVLNQTLSIREGVGQMFSLLPSNQQERYREFLQSTITLRAGFVEFLQETQSHGFRFDVVSGGMDFFVHPILEGHVAPEHIFCNHVDFSGETARVTWPHACDVHCLNDCGCCKPTIARQIVSPTDTLIVIGDSVTDFEIAKRADVVYARGQLISLCEAEGIRHVPFETFYDISAYMKGVNV.

The protein belongs to the HAD-like hydrolase superfamily. MtnX family.

The catalysed reaction is 2-hydroxy-5-methylsulfanyl-3-oxopent-1-enyl phosphate + H2O = 1,2-dihydroxy-5-(methylsulfanyl)pent-1-en-3-one + phosphate. The protein operates within amino-acid biosynthesis; L-methionine biosynthesis via salvage pathway; L-methionine from S-methyl-5-thio-alpha-D-ribose 1-phosphate: step 4/6. Functionally, dephosphorylates 2-hydroxy-3-keto-5-methylthiopentenyl-1-phosphate (HK-MTPenyl-1-P) yielding 1,2-dihydroxy-3-keto-5-methylthiopentene (DHK-MTPene). The sequence is that of 2-hydroxy-3-keto-5-methylthiopentenyl-1-phosphate phosphatase from Exiguobacterium sp. (strain ATCC BAA-1283 / AT1b).